Reading from the N-terminus, the 244-residue chain is Phosphoadenosine 5'-phosphosulfate reductase (244 aa).

Cys239 serves as the catalytic Nucleophile; cysteine thiosulfonate intermediate.

Belongs to the PAPS reductase family. CysH subfamily.

The protein localises to the cytoplasm. It catalyses the reaction [thioredoxin]-disulfide + sulfite + adenosine 3',5'-bisphosphate + 2 H(+) = [thioredoxin]-dithiol + 3'-phosphoadenylyl sulfate. It participates in sulfur metabolism; hydrogen sulfide biosynthesis; sulfite from sulfate: step 3/3. Its function is as follows. Catalyzes the formation of sulfite from phosphoadenosine 5'-phosphosulfate (PAPS) using thioredoxin as an electron donor. The protein is Phosphoadenosine 5'-phosphosulfate reductase of Yersinia enterocolitica serotype O:8 / biotype 1B (strain NCTC 13174 / 8081).